The following is a 92-amino-acid chain: RQC P-site tRNA stabilizing factor (92 aa).

Positions 5–65 (MRLDKYLKVS…GPKIVTAKIE (61 aa)) constitute an S4 RNA-binding domain.

The protein belongs to the RqcP family. Associates with stalled 50S ribosomal subunits. Binds to RqcH, 23S rRNA and the P-site tRNA. Does not require RqcH for association with 50S subunits.

Key component of the ribosome quality control system (RQC), a ribosome-associated complex that mediates the extraction of incompletely synthesized nascent chains from stalled ribosomes and their subsequent degradation. RqcH recruits Ala-charged tRNA, and with RqcP directs the elongation of stalled nascent chains on 50S ribosomal subunits, leading to non-templated C-terminal alanine extensions (Ala tail). The Ala tail promotes nascent chain degradation. RqcP is associated with the translocation-like movement of the peptidyl-tRNA from the A-site into the P-site. The polypeptide is RQC P-site tRNA stabilizing factor (Listeria innocua serovar 6a (strain ATCC BAA-680 / CLIP 11262)).